Consider the following 512-residue polypeptide: NAD(P)H-quinone oxidoreductase chain 4, chloroplastic (512 aa).

14 helical membrane-spanning segments follow: residues 4-24 (LPWL…IPFI), 34-54 (WYAL…FGYH), 87-107 (MPLV…AWPV), 111-131 (AKLF…VFVS), 134-154 (LLLF…LLLV), 167-187 (FILY…TMAF), 210-230 (ILLY…FPLH), 241-261 (HYST…YALI), 273-293 (LIFA…AALT), 312-332 (MGFV…GAVL), 333-353 (QMIS…TTYD), 373-395 (TFAM…GFVA), 416-436 (IITF…LSML), and 462-482 (IFVI…PKMA).

The protein belongs to the complex I subunit 4 family.

The protein resides in the plastid. It is found in the chloroplast thylakoid membrane. The catalysed reaction is a plastoquinone + NADH + (n+1) H(+)(in) = a plastoquinol + NAD(+) + n H(+)(out). It catalyses the reaction a plastoquinone + NADPH + (n+1) H(+)(in) = a plastoquinol + NADP(+) + n H(+)(out). In Chlorokybus atmophyticus (Soil alga), this protein is NAD(P)H-quinone oxidoreductase chain 4, chloroplastic.